Reading from the N-terminus, the 134-residue chain is Seminal plasma protein PDC-109 (134 aa).

A signal peptide spans 1–25 (MALQLGLFLIWAGVSVFLQLDPVNG). Residue Thr-36 is glycosylated (O-linked (GalNAc...) threonine). Fibronectin type-II domains follow at residues 44-88 (PEDE…YCAQ) and 89-134 (RDYA…WKYC). Disulfide bonds link Cys-49-Cys-73, Cys-63-Cys-86, Cys-94-Cys-119, and Cys-108-Cys-134.

The protein belongs to the seminal plasma protein family. As to quaternary structure, homodimer. In terms of processing, O-linked glycan consists of Gal-GalNAc disaccharide which is modified with a sialic acid residue (macro- and/or microheterogeneity account for differences between BSP-A1 and BSP-A2). Major component of seminal plasma.

Its subcellular location is the secreted. Functionally, could enhance the fertilizing capacity of bull spermatozoa upon interaction with heparin-like glycosaminoglycans present in the female genital tract. Exhibits both simulatory and inhibitory actions on the release of pituitary gonadotropins. The chain is Seminal plasma protein PDC-109 from Bos taurus (Bovine).